The chain runs to 360 residues: tRNA N6-adenosine threonylcarbamoyltransferase (360 aa).

Fe cation-binding residues include histidine 115 and histidine 119. Substrate contacts are provided by residues leucine 137–glycine 141, aspartate 170, glycine 183, and asparagine 283. Aspartate 311 is a binding site for Fe cation.

It belongs to the KAE1 / TsaD family. Fe(2+) is required as a cofactor.

The protein localises to the cytoplasm. It carries out the reaction L-threonylcarbamoyladenylate + adenosine(37) in tRNA = N(6)-L-threonylcarbamoyladenosine(37) in tRNA + AMP + H(+). Required for the formation of a threonylcarbamoyl group on adenosine at position 37 (t(6)A37) in tRNAs that read codons beginning with adenine. Is involved in the transfer of the threonylcarbamoyl moiety of threonylcarbamoyl-AMP (TC-AMP) to the N6 group of A37, together with TsaE and TsaB. TsaD likely plays a direct catalytic role in this reaction. The sequence is that of tRNA N6-adenosine threonylcarbamoyltransferase from Sinorhizobium medicae (strain WSM419) (Ensifer medicae).